A 125-amino-acid polypeptide reads, in one-letter code: Small ribosomal subunit protein uS13 (125 aa).

Residues 93–125 are disordered; it reads RKGLPVRGQRTKTNARTRKGPKRTVAGKKKAGR.

The protein belongs to the universal ribosomal protein uS13 family. Part of the 30S ribosomal subunit. Forms a loose heterodimer with protein S19. Forms two bridges to the 50S subunit in the 70S ribosome.

Its function is as follows. Located at the top of the head of the 30S subunit, it contacts several helices of the 16S rRNA. In the 70S ribosome it contacts the 23S rRNA (bridge B1a) and protein L5 of the 50S subunit (bridge B1b), connecting the 2 subunits; these bridges are implicated in subunit movement. Contacts the tRNAs in the A and P-sites. This is Small ribosomal subunit protein uS13 from Paenarthrobacter aurescens (strain TC1).